Consider the following 524-residue polypeptide: AAA ATPase forming ring-shaped complexes (524 aa).

Positions 1–29 are disordered; that stretch reads MGMGQEKHTDAASQSRDPEAVAAHENDQL. A coiled-coil region spans residues 22–59; the sequence is AAHENDQLRQRNHALAKALTRATEELRKAKAQLEQFMA. Residue 250 to 255 participates in ATP binding; that stretch reads GNGKTL.

It belongs to the AAA ATPase family. Homohexamer. Assembles into a hexameric ring structure.

This is AAA ATPase forming ring-shaped complexes from Bifidobacterium animalis subsp. lactis (strain BB-12).